A 515-amino-acid chain; its full sequence is 1-pyrroline-5-carboxylate dehydrogenase (515 aa).

Residues E286 and C320 contribute to the active site.

It belongs to the aldehyde dehydrogenase family. RocA subfamily.

It carries out the reaction L-glutamate 5-semialdehyde + NAD(+) + H2O = L-glutamate + NADH + 2 H(+). The protein operates within amino-acid degradation; L-proline degradation into L-glutamate; L-glutamate from L-proline: step 2/2. The polypeptide is 1-pyrroline-5-carboxylate dehydrogenase (Oceanobacillus iheyensis (strain DSM 14371 / CIP 107618 / JCM 11309 / KCTC 3954 / HTE831)).